The chain runs to 570 residues: Molecular chaperone MKKS (570 aa).

ATP is bound at residue 192–199; it reads ERMVLGKS. The interval 198 to 370 is substrate-binding apical domain; it reads KSIIVPLKGQ…FHLLPNEATV (173 aa).

It belongs to the TCP-1 chaperonin family. In terms of assembly, component of a complex composed at least of MKKS, BBS10, BBS12, TCP1, CCT2, CCT3, CCT4, CCT5 and CCT8. Interacts with STUB1. Interacts with BBS2 (via coiled coil domain). Interacts with CCDC28B. Interacts with BBS12. Interacts with SMARCC1, a component of the SWI/SNF complexes; the interaction takes place predominantly in the cytoplasm and may modulate SMARCC1 location. Interacts with DLEC1. Widely expressed in adult and fetal tissues. Expressed in the developing heart, brain retina, limb buds, as well as in the developing neural tube. Expressed in the embryo in the first and second branchial arches. Expressed in parafin embedded tissue sections of brain, kidney, retina, olfactory epithelium and the ependymal layer of ventricles. Detected only in restricted regions of these tissue sections, including the ciliated border of renal tubules, the connecting cilium and the inner and outer nuclear layers of retina, and the ciliated layer of olfactory epithelia.

It localises to the cytoplasm. Its subcellular location is the cytoskeleton. The protein localises to the microtubule organizing center. The protein resides in the centrosome. It is found in the cytosol. It localises to the nucleus. Functionally, probable molecular chaperone that assists the folding of proteins upon ATP hydrolysis. Plays a role in the assembly of BBSome, a complex involved in ciliogenesis regulating transports vesicles to the cilia. May play a role in protein processing in limb, cardiac and reproductive system development. May play a role in cytokinesis. The protein is Molecular chaperone MKKS (Mkks) of Mus musculus (Mouse).